Here is a 1844-residue protein sequence, read N- to C-terminus: Non-structural replication polyprotein (1844 aa).

The region spanning 58-219 (SGLGTSHHPH…NQPSDAHSWL (162 aa)) is the Alphavirus-like MT domain. The tract at residues 571 to 739 (TAFLPFTPTT…QLLPAPLTND (169 aa)) is disordered. 2 stretches are compositionally biased toward low complexity: residues 609–621 (SSPG…TTAA) and 726–736 (LPSSQLLPAPL). The 152-residue stretch at 728–879 (SSQLLPAPLT…FSPGKRLLGS (152 aa)) folds into the OTU domain. Positions 730 to 884 (QLLPAPLTND…RLLGSQPSAK (155 aa)) constitute a Peptidase C21 domain. Residue cysteine 783 is the For protease activity of the active site. The tract at residues 859 to 887 (DITHTTGPPSHFSPGKRLLGSQPSAKGHP) is disordered. A GPP flap motif is present at residues 865 to 867 (GPP). Catalysis depends on histidine 869, which acts as the For protease activity. Positions 946-1103 (TGPTPKERII…RLLPYIDMYC (158 aa)) constitute a (+)RNA virus helicase ATP-binding domain. Residue 976–983 (GFAGCGKT) participates in ATP binding. In terms of domain architecture, (+)RNA virus helicase C-terminal spans 1104–1236 (WWSYRIPQCI…SLIIMDRYFP (133 aa)). In terms of domain architecture, RdRp catalytic spans 1572–1678 (TPKIANDYTA…DHPLPTRHDW (107 aa)).

Belongs to the Tymoviridae non-structural replication polyprotein family. In terms of assembly, interacts with host ubiquitin. Specific enzymatic cleavages by the host yield mature proteins.

Its subcellular location is the host chloroplast envelope. It carries out the reaction Thiol-dependent hydrolysis of ester, thioester, amide, peptide and isopeptide bonds formed by the C-terminal Gly of ubiquitin (a 76-residue protein attached to proteins as an intracellular targeting signal).. It catalyses the reaction RNA(n) + a ribonucleoside 5'-triphosphate = RNA(n+1) + diphosphate. Functionally, acts as a cysteine protease, methyltransferase and deubiquitinase. The cysteine protease activity cleaves the polyprotein giving rise to mature proteins. The protease has the ability to process substrates in trans. The methyltransferase domain is probably involved in viral RNA capping. The deubiquitylating activity counteracts the degradation of the viral polymerase mediated by the host ubiquitin-proteasome system. The polymerase is thus stabilized and infectivity is increased. Favors K63 poly-Ub linkage. In terms of biological role, RNA-directed RNA polymerase is responsible for the replication and transcription of the genome. This is Non-structural replication polyprotein from Turnip yellow mosaic virus.